The primary structure comprises 416 residues: Cytochrome P450 monooxygenase PikC (416 aa).

Substrate-binding positions include Glu94, 187-191 (AQTAM), and 238-246 (HILLVAGHE). Cys354 contacts heme.

Belongs to the cytochrome P450 family. The cofactor is heme.

It catalyses the reaction narbomycin + 2 reduced [2Fe-2S]-[ferredoxin] + O2 + 2 H(+) = pikromycin + 2 oxidized [2Fe-2S]-[ferredoxin] + H2O. It carries out the reaction narbomycin + 2 reduced [2Fe-2S]-[ferredoxin] + O2 + 2 H(+) = neopikromycin + 2 oxidized [2Fe-2S]-[ferredoxin] + H2O. The enzyme catalyses narbomycin + 4 reduced [2Fe-2S]-[ferredoxin] + 2 O2 + 4 H(+) = novapikromycin + 4 oxidized [2Fe-2S]-[ferredoxin] + 2 H2O. The catalysed reaction is 10-deoxymethymycin + 2 reduced [2Fe-2S]-[ferredoxin] + O2 + 2 H(+) = methymycin + 2 oxidized [2Fe-2S]-[ferredoxin] + H2O. It catalyses the reaction 10-deoxymethymycin + 2 reduced [2Fe-2S]-[ferredoxin] + O2 + 2 H(+) = neomethymycin + 2 oxidized [2Fe-2S]-[ferredoxin] + H2O. It carries out the reaction 10-deoxymethymycin + 4 reduced [2Fe-2S]-[ferredoxin] + 2 O2 + 4 H(+) = novamethymycin + 4 oxidized [2Fe-2S]-[ferredoxin] + 2 H2O. It participates in antibiotic biosynthesis. Functionally, catalyzes the hydroxylation of narbomycin to give rise to pikromycin, and of 10-deoxymethymycin (YC-17) to give rise to methymycin and neomethymycin during macrolide antibiotic biosynthesis. In addition, produces low amounts of neopicromycin, novapikromycin and novamethymycin. Requires the participation of a ferredoxin and a ferredoxin reductase for the transfer of electrons from NADPH to the monooxygenase. This Streptomyces venezuelae protein is Cytochrome P450 monooxygenase PikC.